A 499-amino-acid polypeptide reads, in one-letter code: tRNA-specific adenosine deaminase 1 (499 aa).

Residues 63-498 enclose the A to I editase domain; that stretch reads SMGTGTKCIG…IRNPPDYHQF (436 aa). His87 contacts Zn(2+). The active-site Proton donor is the Glu89. Residues Arg93 and Arg94 each coordinate 1D-myo-inositol hexakisphosphate. Cys142 is a Zn(2+) binding site. Disordered regions lie at residues 170-194 and 212-237; these read PVQE…SPVA and HHGT…EPDA. Basic and acidic residues predominate over residues 178–187; that stretch reads EDSKDKRNCE. Ser191 is modified (phosphoserine). Cys294 contacts Zn(2+). Residues Lys297, Arg300, Lys430, and Lys466 each coordinate 1D-myo-inositol hexakisphosphate.

It belongs to the ADAT1 family. 1D-myo-inositol hexakisphosphate serves as cofactor.

It carries out the reaction adenosine(37) in tRNA(Ala) + H2O + H(+) = inosine(37) in tRNA(Ala) + NH4(+). Specifically deaminates adenosine-37 to inosine in tRNA-Ala. This Mus musculus (Mouse) protein is tRNA-specific adenosine deaminase 1 (Adat1).